A 1784-amino-acid polypeptide reads, in one-letter code: Histone acetyltransferase KAT6B (1784 aa).

Positions 1–77 (MVKLANPLYT…LASYKDPDNP (77 aa)) constitute an SAMD1-like winged helix (WH) domain. Positions 72 to 98 (KDPDNPGRFSSVKPGTFPKSTKESRGS) are disordered. Residues 103 to 176 (RNVDWNKLLR…KDGPQYRVNY (74 aa)) form the H15 domain. 2 PHD-type zinc fingers span residues 213–272 (IPIC…CKTC) and 269–320 (CKTC…CRPK). Ser-355 is subject to Phosphoserine. A negatively regulates HAT activity region spans residues 361 to 425 (GSMNAFTGRG…ECESGVEDCG (65 aa)). Residue Lys-381 forms a Glycyl lysine isopeptide (Lys-Gly) (interchain with G-Cter in SUMO2) linkage. The MYST-type HAT domain maps to 423–697 (DCGRYPSVIE…LDPDSLRWTP (275 aa)). Positions 426–716 (RYPSVIEFGK…EEEREAEKEA (291 aa)) are catalytic. A C2HC MYST-type zinc finger spans residues 456 to 481 (LYLCEFCLKYMKSKNILLRHSKKCGW). Positions 460-716 (EFCLKYMKSK…EEEREAEKEA (257 aa)) are interaction with BRPF1. Lys-523 bears the N6-acetyllysine; by autocatalysis mark. Residues 564-568 (SCIMI) and 573-579 (QRQGFGR) each bind acetyl-CoA. Glu-599 acts as the Proton donor/acceptor in catalysis. An acetyl-CoA-binding site is contributed by Ser-603. Disordered stretches follow at residues 730-884 (EQEV…RPMP), 904-1163 (RKAF…FKEV), 1195-1273 (SCNS…FQDC), and 1291-1330 (QSPQ…SPSV). Residues 733-751 (VLSTRANSRQSPAKVQSKN) are compositionally biased toward polar residues. 3 positions are modified to N6-acetyllysine: Lys-746, Lys-750, and Lys-752. Residue Ser-756 is modified to Phosphoserine. Residues 777–819 (SEEEEEEEEDEEEEDEEEEEEEEEDEEEEEEEEEEEEEEEEEN) show a composition bias toward acidic residues. Residues 820 to 831 (IQSSPPRLTKPQ) are compositionally biased toward polar residues. Residues 835 to 854 (IKRKRPFVLKKKRGRKRRRI) are compositionally biased toward basic residues. A compositionally biased stretch (low complexity) spans 856–869 (SSVTTETISETTEV). Residues 904–914 (RKAFQHQPGKK) are compositionally biased toward basic residues. Composition is skewed to basic and acidic residues over residues 938–957 (MNDD…EPLK) and 1055–1064 (EKPEDDLIKP). Over residues 1065 to 1087 (EEEEEEEEEEEEEEGEEEEEEGG) the composition is skewed to acidic residues. Composition is skewed to basic and acidic residues over residues 1088 to 1101 (NVEK…SQEK) and 1107 to 1118 (SPEKEDSARLDD). Over residues 1119-1128 (HEEEEEEDEE) the composition is skewed to acidic residues. Over residues 1144–1163 (HMESAEVEKEELPRESFKEV) the composition is skewed to basic and acidic residues. The span at 1209–1218 (AVPESDEEPP) shows a compositional bias: acidic residues. A compositionally biased stretch (basic and acidic residues) spans 1224-1240 (QKQDQKNSKEVDTEFKE). Polar residues-rich tracts occupy residues 1251-1263 (ETVQ…TQES) and 1291-1302 (QSPQIATTLDDC). The tract at residues 1271-1784 (QDCAETQEAC…QSLNGSYMRR (514 aa)) is interaction with RUNX1 and RUNX2. Residues 1305–1322 (SDHSSPVSSVHSHPGQSV) are compositionally biased toward low complexity.

Belongs to the MYST (SAS/MOZ) family. As to quaternary structure, component of the MOZ/MORF complex composed at least of ING5, KAT6A, KAT6B, MEAF6 and one of BRPF1, BRD1/BRPF2 and BRPF3. Interacts with RUNX1 and RUNX2. In terms of processing, autoacetylation at Lys-523 is required for proper function.

It is found in the nucleus. It catalyses the reaction L-lysyl-[protein] + acetyl-CoA = N(6)-acetyl-L-lysyl-[protein] + CoA + H(+). In terms of biological role, histone acetyltransferase which may be involved in both positive and negative regulation of transcription. Required for RUNX2-dependent transcriptional activation. May be involved in cerebral cortex development. Component of the MOZ/MORF complex which has a histone H3 acetyltransferase activity. This is Histone acetyltransferase KAT6B (KAT6B) from Macaca fascicularis (Crab-eating macaque).